We begin with the raw amino-acid sequence, 562 residues long: Pyruvate kinase isozyme G, chloroplastic (562 aa).

Arg-121 serves as a coordination point for substrate. K(+) is bound by residues Asn-123, Ser-125, Asp-156, and Thr-157. 123-126 (NMSH) provides a ligand contact to ATP. Mg(2+) is bound at residue Glu-308. The substrate site is built by Gly-331, Asp-332, and Thr-364. A Mg(2+)-binding site is contributed by Asp-332.

It belongs to the pyruvate kinase family. As to quaternary structure, homotetramer. It depends on Mg(2+) as a cofactor. K(+) serves as cofactor. As to expression, highest levels in leaves. Also found in stems, roots and flowers.

The protein resides in the plastid. It localises to the chloroplast. It carries out the reaction pyruvate + ATP = phosphoenolpyruvate + ADP + H(+). Its pathway is carbohydrate degradation; glycolysis; pyruvate from D-glyceraldehyde 3-phosphate: step 5/5. The protein is Pyruvate kinase isozyme G, chloroplastic of Nicotiana tabacum (Common tobacco).